A 455-amino-acid chain; its full sequence is Glutamyl-tRNA reductase (455 aa).

Residues 49–52 (TCNR), S109, 114–116 (ETQ), and Q120 each bind substrate. Catalysis depends on C50, which acts as the Nucleophile. 189-194 (GAGKMG) serves as a coordination point for NADP(+).

Belongs to the glutamyl-tRNA reductase family. In terms of assembly, homodimer.

It carries out the reaction (S)-4-amino-5-oxopentanoate + tRNA(Glu) + NADP(+) = L-glutamyl-tRNA(Glu) + NADPH + H(+). Its pathway is porphyrin-containing compound metabolism; protoporphyrin-IX biosynthesis; 5-aminolevulinate from L-glutamyl-tRNA(Glu): step 1/2. Catalyzes the NADPH-dependent reduction of glutamyl-tRNA(Glu) to glutamate 1-semialdehyde (GSA). The protein is Glutamyl-tRNA reductase of Bacillus velezensis (strain DSM 23117 / BGSC 10A6 / LMG 26770 / FZB42) (Bacillus amyloliquefaciens subsp. plantarum).